Consider the following 409-residue polypeptide: UPF0261 protein Spro_4740 (409 aa).

Belongs to the UPF0261 family.

The polypeptide is UPF0261 protein Spro_4740 (Serratia proteamaculans (strain 568)).